We begin with the raw amino-acid sequence, 95 residues long: Small ubiquitin-related modifier 4 (95 aa).

One can recognise a Ubiquitin-like domain in the interval 17 to 95; the sequence is HINLKVAGQD…VLQQQTGGVY (79 aa). Residue G93 forms a Glycyl lysine isopeptide (Gly-Lys) (interchain with K-? in acceptor proteins) linkage. The propeptide occupies 94–95; the sequence is VY.

The protein belongs to the ubiquitin family. SUMO subfamily. Interacts with SAE2. Covalently attached to a number of proteins.

In terms of biological role, ubiquitin-like protein which can be covalently attached to target lysines as a monomer. Does not seem to be involved in protein degradation and may modulate protein subcellular localization, stability or activity. Upon oxidative stress, conjugates to various anti-oxidant enzymes, chaperones, and stress defense proteins. May also conjugate to NFKBIA, TFAP2A and FOS, negatively regulating their transcriptional activity, and to NR3C1, positively regulating its transcriptional activity. Covalent attachment to its substrates requires prior activation by the E1 complex SAE1-SAE2 and linkage to the E2 enzyme UBE2I. This Sus scrofa (Pig) protein is Small ubiquitin-related modifier 4 (SUMO4).